The chain runs to 117 residues: Large ribosomal subunit protein uL18 (117 aa).

It belongs to the universal ribosomal protein uL18 family. Part of the 50S ribosomal subunit; part of the 5S rRNA/L5/L18/L25 subcomplex. Contacts the 5S and 23S rRNAs.

In terms of biological role, this is one of the proteins that bind and probably mediate the attachment of the 5S RNA into the large ribosomal subunit, where it forms part of the central protuberance. The chain is Large ribosomal subunit protein uL18 from Proteus mirabilis (strain HI4320).